Here is a 97-residue protein sequence, read N- to C-terminus: UPF0235 protein PFL_5841 (97 aa).

It belongs to the UPF0235 family.

In Pseudomonas fluorescens (strain ATCC BAA-477 / NRRL B-23932 / Pf-5), this protein is UPF0235 protein PFL_5841.